The sequence spans 201 residues: Mediator of RNA polymerase II transcription subunit 22 (201 aa).

Residues 93-123 are a coiled coil; that stretch reads SVNEAIDQRNQQLRALQEECDRKLIALRDEV. A disordered region spans residues 166-201; sequence LSAPLLASPEPSAGGPLQAAAPTHSHAGGPGPTEHA.

Component of the Mediator complex, which is composed of MED1, MED4, MED6, MED7, MED8, MED9, MED10, MED11, MED12, MED13, MED13L, MED14, MED15, MED16, MED17, MED18, MED19, MED20, MED21, MED22, MED23, MED24, MED25, MED26, MED27, MED29, MED30, MED31, CCNC, CDK8 and CDC2L6/CDK11. The MED12, MED13, CCNC and CDK8 subunits form a distinct module termed the CDK8 module. Mediator containing the CDK8 module is less active than Mediator lacking this module in supporting transcriptional activation. Individual preparations of the Mediator complex lacking one or more distinct subunits have been variously termed ARC, CRSP, DRIP, PC2, SMCC and TRAP.

The protein resides in the nucleus. In terms of biological role, component of the Mediator complex, a coactivator involved in the regulated transcription of nearly all RNA polymerase II-dependent genes. Mediator functions as a bridge to convey information from gene-specific regulatory proteins to the basal RNA polymerase II transcription machinery. Mediator is recruited to promoters by direct interactions with regulatory proteins and serves as a scaffold for the assembly of a functional preinitiation complex with RNA polymerase II and the general transcription factors. This is Mediator of RNA polymerase II transcription subunit 22 (MED22) from Bos taurus (Bovine).